The primary structure comprises 196 residues: ATP-dependent Clp protease proteolytic subunit (196 aa).

The Nucleophile role is filled by serine 96. Histidine 121 is a catalytic residue.

This sequence belongs to the peptidase S14 family. As to quaternary structure, fourteen ClpP subunits assemble into 2 heptameric rings which stack back to back to give a disk-like structure with a central cavity, resembling the structure of eukaryotic proteasomes.

The protein resides in the cytoplasm. The catalysed reaction is Hydrolysis of proteins to small peptides in the presence of ATP and magnesium. alpha-casein is the usual test substrate. In the absence of ATP, only oligopeptides shorter than five residues are hydrolyzed (such as succinyl-Leu-Tyr-|-NHMec, and Leu-Tyr-Leu-|-Tyr-Trp, in which cleavage of the -Tyr-|-Leu- and -Tyr-|-Trp bonds also occurs).. Cleaves peptides in various proteins in a process that requires ATP hydrolysis. Has a chymotrypsin-like activity. Plays a major role in the degradation of misfolded proteins. This is ATP-dependent Clp protease proteolytic subunit from Streptococcus pneumoniae (strain P1031).